An 82-amino-acid polypeptide reads, in one-letter code: UPF0235 protein Pden_2174 (82 aa).

Belongs to the UPF0235 family.

This is UPF0235 protein Pden_2174 from Paracoccus denitrificans (strain Pd 1222).